The chain runs to 160 residues: Coat protein TP3 (160 aa).

The protein localises to the virion. This Thermoproteus tenax (TTV1) protein is Coat protein TP3.